The chain runs to 258 residues: Malonyl-[acyl-carrier protein] O-methyltransferase (258 aa).

The protein belongs to the methyltransferase superfamily.

It catalyses the reaction malonyl-[ACP] + S-adenosyl-L-methionine = malonyl-[ACP] methyl ester + S-adenosyl-L-homocysteine. Its pathway is cofactor biosynthesis; biotin biosynthesis. In terms of biological role, converts the free carboxyl group of a malonyl-thioester to its methyl ester by transfer of a methyl group from S-adenosyl-L-methionine (SAM). It allows to synthesize pimeloyl-ACP via the fatty acid synthetic pathway. This Haemophilus ducreyi (strain 35000HP / ATCC 700724) protein is Malonyl-[acyl-carrier protein] O-methyltransferase.